A 164-amino-acid polypeptide reads, in one-letter code: Transcriptional regulator MraZ (164 aa).

SpoVT-AbrB domains are found at residues 7–60 (HFTN…EIDE) and 83–126 (SEIL…EPGR). The interval 141 to 164 (LRKQLSSRPVAPDAQPPRPHGARE) is disordered. Over residues 154–164 (AQPPRPHGARE) the composition is skewed to pro residues.

The protein belongs to the MraZ family. Forms oligomers.

The protein localises to the cytoplasm. It localises to the nucleoid. This Beijerinckia indica subsp. indica (strain ATCC 9039 / DSM 1715 / NCIMB 8712) protein is Transcriptional regulator MraZ.